Reading from the N-terminus, the 322-residue chain is Probable F-box protein At1g60180 (322 aa).

An F-box domain is found at 45-88 (FCELSDECIAKILSGCPILESLTLSHCIYLTVLDLSKSLRLRTL).

In Arabidopsis thaliana (Mouse-ear cress), this protein is Probable F-box protein At1g60180.